The sequence spans 259 residues: Glucosamine-6-phosphate deaminase (259 aa).

The Proton acceptor; for enolization step role is filled by D66. The For ring-opening step role is filled by D135. Catalysis depends on H137, which acts as the Proton acceptor; for ring-opening step. Catalysis depends on E142, which acts as the For ring-opening step.

It belongs to the glucosamine/galactosamine-6-phosphate isomerase family. NagB subfamily.

It catalyses the reaction alpha-D-glucosamine 6-phosphate + H2O = beta-D-fructose 6-phosphate + NH4(+). The protein operates within amino-sugar metabolism; N-acetylneuraminate degradation; D-fructose 6-phosphate from N-acetylneuraminate: step 5/5. Functionally, catalyzes the reversible isomerization-deamination of glucosamine 6-phosphate (GlcN6P) to form fructose 6-phosphate (Fru6P) and ammonium ion. The chain is Glucosamine-6-phosphate deaminase from Pseudarthrobacter chlorophenolicus (strain ATCC 700700 / DSM 12829 / CIP 107037 / JCM 12360 / KCTC 9906 / NCIMB 13794 / A6) (Arthrobacter chlorophenolicus).